The following is a 599-amino-acid chain: Aspartate--tRNA(Asp/Asn) ligase (599 aa).

Residue E172 participates in L-aspartate binding. Residues 196–199 (QLFK) form an aspartate region. R218 lines the L-aspartate pocket. ATP contacts are provided by residues 218 to 220 (RDE) and Q227. H451 is an L-aspartate binding site. E485 serves as a coordination point for ATP. R492 is a binding site for L-aspartate. Residue 537 to 540 (GLDR) participates in ATP binding.

Belongs to the class-II aminoacyl-tRNA synthetase family. Type 1 subfamily. Homodimer.

Its subcellular location is the cytoplasm. The enzyme catalyses tRNA(Asx) + L-aspartate + ATP = L-aspartyl-tRNA(Asx) + AMP + diphosphate. In terms of biological role, aspartyl-tRNA synthetase with relaxed tRNA specificity since it is able to aspartylate not only its cognate tRNA(Asp) but also tRNA(Asn). Reaction proceeds in two steps: L-aspartate is first activated by ATP to form Asp-AMP and then transferred to the acceptor end of tRNA(Asp/Asn). This is Aspartate--tRNA(Asp/Asn) ligase from Dechloromonas aromatica (strain RCB).